The sequence spans 878 residues: Phosphoenolpyruvate carboxylase (878 aa).

Catalysis depends on residues His137 and Lys545.

This sequence belongs to the PEPCase type 1 family. Mg(2+) is required as a cofactor.

The enzyme catalyses oxaloacetate + phosphate = phosphoenolpyruvate + hydrogencarbonate. Functionally, forms oxaloacetate, a four-carbon dicarboxylic acid source for the tricarboxylic acid cycle. In Proteus mirabilis (strain HI4320), this protein is Phosphoenolpyruvate carboxylase.